Consider the following 446-residue polypeptide: Histidine--tRNA ligase (446 aa).

This sequence belongs to the class-II aminoacyl-tRNA synthetase family. In terms of assembly, homodimer.

It is found in the cytoplasm. The catalysed reaction is tRNA(His) + L-histidine + ATP = L-histidyl-tRNA(His) + AMP + diphosphate + H(+). In Burkholderia vietnamiensis (strain G4 / LMG 22486) (Burkholderia cepacia (strain R1808)), this protein is Histidine--tRNA ligase.